Consider the following 276-residue polypeptide: Bis(5'-nucleosyl)-tetraphosphatase, symmetrical (276 aa).

Belongs to the Ap4A hydrolase family.

It carries out the reaction P(1),P(4)-bis(5'-adenosyl) tetraphosphate + H2O = 2 ADP + 2 H(+). Functionally, hydrolyzes diadenosine 5',5'''-P1,P4-tetraphosphate to yield ADP. In Neisseria meningitidis serogroup A / serotype 4A (strain DSM 15465 / Z2491), this protein is Bis(5'-nucleosyl)-tetraphosphatase, symmetrical (apaH).